Reading from the N-terminus, the 381-residue chain is Cytochrome b (381 aa).

The next 4 helical transmembrane spans lie at 34–54 (FGSL…FLAM), 78–99 (WLIR…YLHI), 114–134 (WNTG…GYVL), and 179–199 (FFTF…VHLL). Heme b contacts are provided by histidine 84 and histidine 98. The heme b site is built by histidine 183 and histidine 197. Histidine 202 contacts a ubiquinone. A run of 4 helical transmembrane segments spans residues 227 to 247 (YKDL…TLFS), 289 to 309 (LGGV…PTLH), 321 to 341 (LTQI…WIGG), and 348 to 368 (FIII…LLMP).

It belongs to the cytochrome b family. As to quaternary structure, the cytochrome bc1 complex contains 3 respiratory subunits (MT-CYB, CYC1 and UQCRFS1), 2 core proteins (UQCRC1 and UQCRC2) and probably 6 low-molecular weight proteins. It depends on heme b as a cofactor.

The protein localises to the mitochondrion inner membrane. Component of the ubiquinol-cytochrome c reductase complex (complex III or cytochrome b-c1 complex) that is part of the mitochondrial respiratory chain. The b-c1 complex mediates electron transfer from ubiquinol to cytochrome c. Contributes to the generation of a proton gradient across the mitochondrial membrane that is then used for ATP synthesis. This chain is Cytochrome b (MT-CYB), found in Chelonia mydas (Green sea-turtle).